The following is a 459-amino-acid chain: Nucleobindin-1 (459 aa).

The N-terminal stretch at 1–25 (MPTSVPRGAPFLLLPPLLMLSAVLA) is a signal peptide. Ser-85 carries the phosphoserine modification. Thr-147 bears the Phosphothreonine mark. Residues 149-217 (EARDLELLIQ…QQRRHREHPK (69 aa)) are a coiled coil. The DNA-binding element occupies 171–217 (HHEEFKRYEMLKEHERRRYLESLGEEQRKEAERKLQEQQRRHREHPK). Residues 192–209 (SLGEEQRKEAERKLQEQQ) show a composition bias toward basic and acidic residues. Residues 192 to 220 (SLGEEQRKEAERKLQEQQRRHREHPKVNV) are disordered. A binds to GNAI2 and GNAI3 region spans residues 227–320 (LKEVWEELDG…VTLEEFLAST (94 aa)). 2 EF-hand domains span residues 239–274 (PNRF…ELEK) and 291–326 (ERLR…KEFG). Ca(2+) is bound by residues Asp-252, Asn-254, Asp-256, Glu-263, Asp-304, Asn-306, Asp-308, and Glu-315. A GBA motif is present at residues 302–332 (NVDTNQDRLVTLEEFLASTQRKEFGETAEGW). Residues 340 to 407 (AYTEEELKRF…RKQQQQEQSA (68 aa)) are a coiled coil. Ser-368 is modified (phosphoserine). The tract at residues 393–459 (LQMEQRKQQQ…VLPQLDSQHL (67 aa)) is disordered. Over residues 433-445 (DQKDVPASEKKVP) the composition is skewed to basic and acidic residues. A Phosphoserine modification is found at Ser-456.

Belongs to the nucleobindin family. As to quaternary structure, interacts (via GBA motif) with guanine nucleotide-binding protein G(i) alpha subunits GNAI1, GNAI2 and GNAI3 with higher affinity for GNAI1 and GNAI3 than for GNAI2. Preferentially interacts with inactive rather than active GNAI3. Interaction with GNAI3 is inhibited when NUCB1 binds calcium, probably due to a conformational change which renders the GBA motif inaccessible. As to expression, minor constituent of the mineralized matrix of bone. Detected in calvaria, rib cartilage, liver, kidney, spleen, brain, lung, skeletal and heart muscle with highest expression in calvaria and approximately half the amount in kidney, liver and brain.

It localises to the golgi apparatus. It is found in the cis-Golgi network membrane. The protein resides in the cytoplasm. The protein localises to the secreted. Major calcium-binding protein of the Golgi which may have a role in calcium homeostasis. Acts as a non-receptor guanine nucleotide exchange factor which binds to and activates alpha subunits of guanine nucleotide-binding proteins (G proteins). The polypeptide is Nucleobindin-1 (Nucb1) (Rattus norvegicus (Rat)).